The chain runs to 85 residues: Small ribosomal subunit protein bS18 (85 aa).

The protein belongs to the bacterial ribosomal protein bS18 family. In terms of assembly, part of the 30S ribosomal subunit. Forms a tight heterodimer with protein bS6.

Functionally, binds as a heterodimer with protein bS6 to the central domain of the 16S rRNA, where it helps stabilize the platform of the 30S subunit. The polypeptide is Small ribosomal subunit protein bS18 (Solidesulfovibrio magneticus (strain ATCC 700980 / DSM 13731 / RS-1) (Desulfovibrio magneticus)).